A 117-amino-acid chain; its full sequence is Large ribosomal subunit protein uL18 (117 aa).

This sequence belongs to the universal ribosomal protein uL18 family. In terms of assembly, part of the 50S ribosomal subunit; part of the 5S rRNA/L5/L18/L25 subcomplex. Contacts the 5S and 23S rRNAs.

This is one of the proteins that bind and probably mediate the attachment of the 5S RNA into the large ribosomal subunit, where it forms part of the central protuberance. The sequence is that of Large ribosomal subunit protein uL18 from Glaesserella parasuis serovar 5 (strain SH0165) (Haemophilus parasuis).